The following is a 411-amino-acid chain: uncharacterized protein (411 aa).

This is an uncharacterized protein from Magallana gigas (Pacific oyster).